The chain runs to 201 residues: Lymphotoxin-alpha (201 aa).

An N-terminal signal peptide occupies residues 1–27 (MTSSGVLCLLGALSLQVLLLQPPGAQG). Residues 23–52 (PGAQGAPNPDNSHSSSPAPPQTAQHLSQKS) are disordered. A compositionally biased stretch (polar residues) spans 31–51 (PDNSHSSSPAPPQTAQHLSQK). Positions 60-201 (PAAHLVGDPS…SSVFFGAFAL (142 aa)) constitute a THD domain. Residue Asn93 is glycosylated (N-linked (GlcNAc...) asparagine). Cys117 and Cys152 form a disulfide bridge.

The protein belongs to the tumor necrosis factor family. As to quaternary structure, homotrimer, and heterotrimer of either two LTB and one LTA subunits or (less prevalent) two LTA and one LTB subunits. Interacts with TNFRSF14.

The protein localises to the secreted. The protein resides in the membrane. In terms of biological role, cytokine that in its homotrimeric form binds to TNFRSF1A/TNFR1, TNFRSF1B/TNFBR and TNFRSF14/HVEM. In its heterotrimeric form with LTB binds to TNFRSF3/LTBR. Lymphotoxin is produced by lymphocytes and is cytotoxic for a wide range of tumor cells in vitro and in vivo. The polypeptide is Lymphotoxin-alpha (LTA) (Notamacropus eugenii (Tammar wallaby)).